A 602-amino-acid polypeptide reads, in one-letter code: UvrABC system protein C (602 aa).

A GIY-YIG domain is found at 15-92 (DLPGSYQMKD…IQKYQPYYNI (78 aa)). The UVR domain occupies 197 to 232 (GKAKASLTAKMERAAKNLQFERAAEIRDQLHYIEQT).

Belongs to the UvrC family. Interacts with UvrB in an incision complex.

The protein localises to the cytoplasm. Its function is as follows. The UvrABC repair system catalyzes the recognition and processing of DNA lesions. UvrC both incises the 5' and 3' sides of the lesion. The N-terminal half is responsible for the 3' incision and the C-terminal half is responsible for the 5' incision. This Lacticaseibacillus casei (strain BL23) (Lactobacillus casei) protein is UvrABC system protein C.